A 202-amino-acid chain; its full sequence is Glycerol-3-phosphate acyltransferase (202 aa).

Helical transmembrane passes span 1–21, 84–104, 116–136, and 143–163; these read MTLIALILPAYLLGSISFGVL, AVAAAALGVFLGHLFPVFLHF, ILLGFNPWMGLLAATIWLAVA, and SLAAIVAASLAPFYALFFLGF.

It belongs to the PlsY family. Probably interacts with PlsX.

Its subcellular location is the cell inner membrane. The enzyme catalyses an acyl phosphate + sn-glycerol 3-phosphate = a 1-acyl-sn-glycero-3-phosphate + phosphate. It functions in the pathway lipid metabolism; phospholipid metabolism. Catalyzes the transfer of an acyl group from acyl-phosphate (acyl-PO(4)) to glycerol-3-phosphate (G3P) to form lysophosphatidic acid (LPA). This enzyme utilizes acyl-phosphate as fatty acyl donor, but not acyl-CoA or acyl-ACP. This chain is Glycerol-3-phosphate acyltransferase, found in Nitrosospira multiformis (strain ATCC 25196 / NCIMB 11849 / C 71).